The following is a 225-amino-acid chain: Histone H3-like centromeric protein cid (225 aa).

Residues 1 to 11 (MPRHSRAKRAP) show a composition bias toward basic residues. The interval 1-131 (MPRHSRAKRA…KAANPMSRAK (131 aa)) is disordered. A compositionally biased stretch (polar residues) spans 43–52 (FTTSQLTLQD). Phosphoserine occurs at positions 74 and 75. T76 is subject to Phosphothreonine. At S77 the chain carries Phosphoserine. Residues 86–103 (RYPTTRSPQTRRMTVQQE) are compositionally biased toward polar residues. The segment at 133 to 225 (MDREIRRLQH…AYICDRGRQF (93 aa)) is H3-like.

Belongs to the histone H3 family. As to quaternary structure, forms a nucleosome-like histone octamer containing two molecules each of H2A, H2B, cid and H4 assembled in one cid-H4 heterotetramer and two H2A-H2B heterodimers. The cid-H4 heterotetramer is more compact and structurally more rigid than corresponding H3-H4 heterotetramers. Interacts with the condensin subunit Cap-G. Interacts with Chrac-14.

Its subcellular location is the nucleus. It is found in the chromosome. The protein resides in the centromere. The protein localises to the kinetochore. Its function is as follows. Histone H3-like variant which exclusively replaces conventional H3 in the nucleosome core of centromeric chromatin at the inner plate of the kinetochore. Required for recruitment and assembly of kinetochore proteins, mitotic progression and chromosome segregation. May serve as an epigenetic mark that propagates centromere identity through replication and cell division. This is Histone H3-like centromeric protein cid from Drosophila melanogaster (Fruit fly).